A 162-amino-acid polypeptide reads, in one-letter code: Ribosome maturation factor RimM (162 aa).

The PRC barrel domain occupies 86 to 160; it reads EGRYYYFALI…GIHVDPIPGL (75 aa).

Belongs to the RimM family. In terms of assembly, binds ribosomal protein uS19.

Its subcellular location is the cytoplasm. An accessory protein needed during the final step in the assembly of 30S ribosomal subunit, possibly for assembly of the head region. Essential for efficient processing of 16S rRNA. May be needed both before and after RbfA during the maturation of 16S rRNA. It has affinity for free ribosomal 30S subunits but not for 70S ribosomes. This chain is Ribosome maturation factor RimM, found in Thermus thermophilus (strain ATCC BAA-163 / DSM 7039 / HB27).